The primary structure comprises 201 residues: ATP synthase subunit b 2 (201 aa).

Residues 1 to 17 (MAEQKNPLTTPSPNADT) show a composition bias toward polar residues. Residues 1 to 39 (MAEQKNPLTTPSPNADTTIVPAGSPHTHTEQPSGGHGGA) form a disordered region. The chain crosses the membrane as a helical span at residues 47–66 (TFLSQLIWLALAFGLLYYLM).

This sequence belongs to the ATPase B chain family. In terms of assembly, F-type ATPases have 2 components, F(1) - the catalytic core - and F(0) - the membrane proton channel. F(1) has five subunits: alpha(3), beta(3), gamma(1), delta(1), epsilon(1). F(0) has three main subunits: a(1), b(2) and c(10-14). The alpha and beta chains form an alternating ring which encloses part of the gamma chain. F(1) is attached to F(0) by a central stalk formed by the gamma and epsilon chains, while a peripheral stalk is formed by the delta and b chains.

It localises to the cell inner membrane. Its function is as follows. F(1)F(0) ATP synthase produces ATP from ADP in the presence of a proton or sodium gradient. F-type ATPases consist of two structural domains, F(1) containing the extramembraneous catalytic core and F(0) containing the membrane proton channel, linked together by a central stalk and a peripheral stalk. During catalysis, ATP synthesis in the catalytic domain of F(1) is coupled via a rotary mechanism of the central stalk subunits to proton translocation. Functionally, component of the F(0) channel, it forms part of the peripheral stalk, linking F(1) to F(0). The b'-subunit is a diverged and duplicated form of b found in plants and photosynthetic bacteria. The chain is ATP synthase subunit b 2 (atpF2) from Methylorubrum extorquens (strain PA1) (Methylobacterium extorquens).